The chain runs to 1449 residues: ABC transporter G family member 21 (1449 aa).

Residues M1–A10 are compositionally biased toward basic and acidic residues. The disordered stretch occupies residues M1 to F49. Positions G14–N25 are enriched in polar residues. Residues I130–P383 enclose the ABC transporter 1 domain. Residues W488–L731 enclose the ABC transmembrane type-2 1 domain. The next 5 membrane-spanning stretches (helical) occupy residues I519–L539, I577–L597, G602–F622, I634–I654, and F747–F767. Positions F818–V1062 constitute an ABC transporter 2 domain. G854 to T861 contributes to the ATP binding site. The ABC transmembrane type-2 2 domain maps to F1152–V1386. 6 consecutive transmembrane segments (helical) span residues Y1155–L1175, F1188–I1208, F1228–F1248, F1266–V1286, A1296–I1316, and L1423–I1443.

Belongs to the ABC transporter superfamily. ABCG family. PDR (TC 3.A.1.205) subfamily.

It is found in the membrane. This is ABC transporter G family member 21 (abcG21) from Dictyostelium discoideum (Social amoeba).